Here is a 282-residue protein sequence, read N- to C-terminus: 3-methyl-2-oxobutanoate hydroxymethyltransferase (282 aa).

Residues Asp63 and Asp102 each contribute to the Mg(2+) site. 3-methyl-2-oxobutanoate is bound by residues 63-64 (DS), Asp102, and Lys132. Glu134 contacts Mg(2+). Residue Glu200 is the Proton acceptor of the active site.

It belongs to the PanB family. Homodecamer; pentamer of dimers. It depends on Mg(2+) as a cofactor.

The protein resides in the cytoplasm. It carries out the reaction 3-methyl-2-oxobutanoate + (6R)-5,10-methylene-5,6,7,8-tetrahydrofolate + H2O = 2-dehydropantoate + (6S)-5,6,7,8-tetrahydrofolate. It participates in cofactor biosynthesis; (R)-pantothenate biosynthesis; (R)-pantoate from 3-methyl-2-oxobutanoate: step 1/2. Functionally, catalyzes the reversible reaction in which hydroxymethyl group from 5,10-methylenetetrahydrofolate is transferred onto alpha-ketoisovalerate to form ketopantoate. In Mycobacterium sp. (strain JLS), this protein is 3-methyl-2-oxobutanoate hydroxymethyltransferase.